The following is a 1624-amino-acid chain: Pappalysin-1 (1624 aa).

A signal peptide spans 1 to 22 (MRLWSWVLRLGLLSAALGCGLA). A propeptide spanning residues 23-81 (ERPRRVRRDPRAVRPPRPAAGPATCATRAARGRRASPPPPPGGAWEAVRVPRRRQQRAA) is cleaved from the precursor. The disordered stretch occupies residues 28 to 93 (VRRDPRAVRP…AEEPSPPSRA (66 aa)). Residues 42 to 51 (AGPATCATRA) show a composition bias toward low complexity. 17 disulfide bridges follow: C141–C232, C324–C619, C329–C654, C411–C425, C421–C437, C454–C470, C471–C482, C580–C597, C584–C609, C707–C875, C710–C878, C750–C832, C772–C778, C944–C972, C957–C968, C980–C987, and C996–C1008. The tract at residues 272–583 (RGLHTPLPQL…ISEIQSCSDP (312 aa)) is metalloprotease. 2 N-linked (GlcNAc...) asparagine glycosylation sites follow: N387 and N398. A glycan (N-linked (GlcNAc...) asparagine) is linked at N426. N516 carries an N-linked (GlcNAc...) asparagine glycan. H559 lines the Zn(2+) pocket. E560 is a catalytic residue. 2 residues coordinate Zn(2+): H563 and H569. 3 N-linked (GlcNAc...) asparagine glycosylation sites follow: N598, N616, and N722. The N-linked (GlcNAc...) asparagine glycan is linked to N822. N-linked (GlcNAc...) asparagine glycosylation is present at N1023. 19 disulfides stabilise this stretch: C1033–C1067, C1048–C1136, C1189–C1202, C1212–C1266, C1224–C1235, C1239–C1277, C1282–C1326, C1297–C1307, C1311–C1339, C1343–C1396, C1359–C1370, C1374–C1407, C1412–C1455, C1425–C1435, C1439–C1468, C1475–C1536, C1489–C1499, C1503–C1551, and C1555–C1573. 5 consecutive Sushi domains span residues 1210-1279 (ADCP…ACEP), 1280-1341 (VDCG…LCEL), 1342-1409 (MCLA…TCVP), 1410-1470 (VTCD…VCRE), and 1473-1553 (GQCS…HCVK). N-linked (GlcNAc...) asparagine glycans are attached at residues N1219 and N1223. A glycan (N-linked (GlcNAc...) asparagine) is linked at N1320. N1516 is a glycosylation site (N-linked (GlcNAc...) asparagine).

The protein belongs to the peptidase M43B family. As to quaternary structure, homodimer; disulfide-linked. In pregnancy serum, predominantly found as a disulfide-linked 2:2 heterotetramer with the proform of PRG2. It depends on Zn(2+) as a cofactor. Detected in kidney, spleen, brain, ovary, breast, skin, prostate, uterus, and placenta.

It is found in the secreted. It catalyses the reaction Cleavage of the 135-Met-|-Lys-136 bond in insulin-like growth factor binding protein (IGFBP)-4, and the 143-Ser-|-Lys-144 bond in IGFBP-5.. In terms of biological role, metalloproteinase which specifically cleaves IGFBP-4 and IGFBP-5, resulting in release of bound IGF. Cleavage of IGFBP-4 is dramatically enhanced by the presence of IGF, whereas cleavage of IGFBP-5 is slightly inhibited by the presence of IGF. Isoform 2 cleaves IGFBP-4 very slowly compared to PAPP-A, but its ability to cleave IGFBP-5 is unaffected. This Mus musculus (Mouse) protein is Pappalysin-1 (Pappa).